Consider the following 137-residue polypeptide: TSC22 domain family protein 3 (137 aa).

The segment at 1 to 60 (MNTEMYQTPMEVAVYQLHNFSISFFSSLLGGDVVSVKLDNSASGASVVALDNKIEQAMDL) is AP1-binding. 2 positions are modified to phosphoserine: asparagine 40 and valine 73. The segment at 76 to 97 (LKEQIRELLEKNSQLERENTLL) is leucine-zipper. Residues 101–137 (ASPEQLEKFQSRLSPEEPAPEAPETPETPEAPGGSAV) form a disordered region. Serine 102 bears the Phosphoserine mark. Phosphothreonine is present on residues threonine 125 and threonine 128. Positions 128-137 (TPEAPGGSAV) are enriched in low complexity.

This sequence belongs to the TSC-22/Dip/Bun family. In terms of assembly, can form homodimers, however it is likely to function as a monomer. Interacts with NFKB1. Interacts (via N-terminus) with JUN and FOS; these interactions inhibit the binding of active AP1 to its target DNA. Interacts with MYOD1. Interacts with HDAC1; this interaction affects HDAC1 activity on MYOG promoter and thus inhibits MYOD1 transcriptional activity. As to quaternary structure, interacts with MYOD1. Expressed in T-cells. Expression inversely correlates with T-cell activation, being higher in resting cells and lower in cells activated by TCR/CD3 triggering (at protein level). Constitutively expressed in lung, intestine, kidney and liver, most probably by resident cells from the macrophage lineage. Expressed in thymus, lymph nodes, bone marrow, spleen, lung and skeletal muscle. In terms of tissue distribution, expressed in spleen and skeletal muscle (at protein level). Expressed in the cortex, medulla and papilla of the kidney. As to expression, expressed in the cortex, medulla and papilla of the kidney. Expressed in spleen and skeletal muscle (at protein level).

It is found in the cytoplasm. Its subcellular location is the nucleus. Its function is as follows. Protects T-cells from IL2 deprivation-induced apoptosis through the inhibition of FOXO3A transcriptional activity that leads to the down-regulation of the pro-apoptotic factor BCL2L11. In macrophages, plays a role in the anti-inflammatory and immunosuppressive effects of glucocorticoids and IL10. In T-cells, inhibits anti-CD3-induced NFKB1 nuclear translocation and thereby NFKB1 DNA-binding activities. In vitro, suppresses AP-1 transcription factor complex DNA-binding activities. In terms of biological role, inhibits myogenic differentiation and mediates anti-myogenic effects of glucocorticoids by binding and regulating MYOD1 and HDAC1 transcriptional activity resulting in reduced expression of MYOG. This Mus musculus (Mouse) protein is TSC22 domain family protein 3.